We begin with the raw amino-acid sequence, 197 residues long: Holliday junction branch migration complex subunit RuvA (197 aa).

The segment at 1 to 64 is domain I; the sequence is MIASVRGTLI…EDALTLYGFK (64 aa). The domain II stretch occupies residues 65–145; that stretch reads TVEQRQLFET…GLPVAPGVSP (81 aa). Positions 146–153 are flexible linker; the sequence is AVAAVNAE. The interval 153-197 is domain III; sequence ELSEMLVSLGFSSAEASTAIAALPPDAPLDLEERLRLALRYFGAR.

Belongs to the RuvA family. As to quaternary structure, homotetramer. Forms an RuvA(8)-RuvB(12)-Holliday junction (HJ) complex. HJ DNA is sandwiched between 2 RuvA tetramers; dsDNA enters through RuvA and exits via RuvB. An RuvB hexamer assembles on each DNA strand where it exits the tetramer. Each RuvB hexamer is contacted by two RuvA subunits (via domain III) on 2 adjacent RuvB subunits; this complex drives branch migration. In the full resolvosome a probable DNA-RuvA(4)-RuvB(12)-RuvC(2) complex forms which resolves the HJ.

It localises to the cytoplasm. The RuvA-RuvB-RuvC complex processes Holliday junction (HJ) DNA during genetic recombination and DNA repair, while the RuvA-RuvB complex plays an important role in the rescue of blocked DNA replication forks via replication fork reversal (RFR). RuvA specifically binds to HJ cruciform DNA, conferring on it an open structure. The RuvB hexamer acts as an ATP-dependent pump, pulling dsDNA into and through the RuvAB complex. HJ branch migration allows RuvC to scan DNA until it finds its consensus sequence, where it cleaves and resolves the cruciform DNA. The polypeptide is Holliday junction branch migration complex subunit RuvA (Roseiflexus castenholzii (strain DSM 13941 / HLO8)).